Here is a 707-residue protein sequence, read N- to C-terminus: SEC14-like protein 5 (707 aa).

Residues 3 to 175 (QKYQSPVRVY…YLNELISQGI (173 aa)) enclose the PRELI/MSF1 domain. A compositionally biased stretch (polar residues) spans 201-211 (RSNQAEQTASQ). Positions 201–232 (RSNQAEQTASQGPCKADAGSHSLAAEPSTPDT) are disordered. Residues 315–491 (PPRVLEEYYA…FLGGECVCNI (177 aa)) enclose the CRAL-TRIO domain. Residues 518 to 667 (TETIYQSSCV…KCKLMYYFEV (150 aa)) form the GOLD domain. The segment covering 686–695 (FSQLSGVTNT) has biased composition (polar residues). Residues 686–707 (FSQLSGVTNTSSKSHSSSLISR) are disordered. Low complexity predominate over residues 696-707 (SSKSHSSSLISR).

This Xenopus tropicalis (Western clawed frog) protein is SEC14-like protein 5 (sec14l1).